The primary structure comprises 325 residues: tRNA N(3)-methylcytidine methyltransferase Mettl2 (325 aa).

2 residues coordinate S-adenosyl-L-methionine: Trp96 and Tyr100. S-adenosyl-L-homocysteine is bound by residues Tyr100, His112, Glu138, Gly140, Asp165, Asp191, and Ile212. Residues Gly140, Asp165, Asp191, and Ile212 each contribute to the S-adenosyl-L-methionine site.

This sequence belongs to the methyltransferase superfamily. METL family. Interacts with Psn. Widely expressed. Expressed in ovaries, head, thorax and abdomen of adult flies, and in the CNS of third instar larvae. Isoform 2 is predominantly expressed in larvae and in adult tissues that have been tested.

Probable methyltransferase. The polypeptide is tRNA N(3)-methylcytidine methyltransferase Mettl2 (Drosophila melanogaster (Fruit fly)).